Reading from the N-terminus, the 201-residue chain is 3-isopropylmalate dehydratase small subunit (201 aa).

It belongs to the LeuD family. LeuD type 1 subfamily. In terms of assembly, heterodimer of LeuC and LeuD.

The enzyme catalyses (2R,3S)-3-isopropylmalate = (2S)-2-isopropylmalate. It functions in the pathway amino-acid biosynthesis; L-leucine biosynthesis; L-leucine from 3-methyl-2-oxobutanoate: step 2/4. Functionally, catalyzes the isomerization between 2-isopropylmalate and 3-isopropylmalate, via the formation of 2-isopropylmaleate. This Ruegeria sp. (strain TM1040) (Silicibacter sp.) protein is 3-isopropylmalate dehydratase small subunit.